The following is a 118-amino-acid chain: Holo-[acyl-carrier-protein] synthase (118 aa).

2 residues coordinate Mg(2+): Asp5 and Glu50.

Belongs to the P-Pant transferase superfamily. AcpS family. Mg(2+) serves as cofactor.

The protein resides in the cytoplasm. It catalyses the reaction apo-[ACP] + CoA = holo-[ACP] + adenosine 3',5'-bisphosphate + H(+). In terms of biological role, transfers the 4'-phosphopantetheine moiety from coenzyme A to a Ser of acyl-carrier-protein. This Wolinella succinogenes (strain ATCC 29543 / DSM 1740 / CCUG 13145 / JCM 31913 / LMG 7466 / NCTC 11488 / FDC 602W) (Vibrio succinogenes) protein is Holo-[acyl-carrier-protein] synthase.